A 404-amino-acid polypeptide reads, in one-letter code: Odorant receptor 67c (404 aa).

Residues 1–45 lie on the Cytoplasmic side of the membrane; the sequence is METAKDNTARTFMELMRVPVQFYRTIGEDIYAHRSTNPLKSLLFK. A helical membrane pass occupies residues 46 to 66; that stretch reads IYLYAGFINFNLLVIGELVFF. The Extracellular segment spans residues 67-79; sequence YNSIQDFETIRLA. The chain crosses the membrane as a helical span at residues 80–100; it reads IAVAPCIGFSLVADFKQAAMI. Residues 101–139 are Cytoplasmic-facing; it reads RGKKTLIMLLDDLENMHPKTLAKQMEYKLPDFEKTMKRV. The chain crosses the membrane as a helical span at residues 140 to 160; that stretch reads INIFTFLCLAYTTTFSFYPAI. The Extracellular portion of the chain corresponds to 161–204; it reads KASVKFNFLGYDTFDRNFGFLIWFPFDATRNNLIYWIMYWDIAH. A helical membrane pass occupies residues 205 to 225; the sequence is GAYLAGIAFLCADLLLVVVIT. Residues 226-277 are Cytoplasmic-facing; it reads QICMHFNYISMRLEDHPCNSNEDKENIEFLIGIIRYHDKCLKLCEHVNDLYS. Residues 278–298 traverse the membrane as a helical segment; the sequence is FSLLLNFLMASMQICFIAFQV. Topologically, residues 299–304 are extracellular; that stretch reads TESTVE. The helical transmembrane segment at 305 to 326 threads the bilayer; that stretch reads VIIIYCIFLMTSMVQVFMVCYY. Topologically, residues 327–373 are cytoplasmic; sequence GDTLIAASLKVGDAAYNQKWFQCSKSYCTMLKLLIMRSQKPASIRPP. The helical transmembrane segment at 374–394 threads the bilayer; the sequence is TFPPISLVTYMKVISMSYQFF. Over 395–404 the chain is Extracellular; that stretch reads ALLRTTYSNN.

It belongs to the insect chemoreceptor superfamily. Heteromeric odorant receptor channel (TC 1.A.69) family. Or49a subfamily. As to quaternary structure, interacts with Orco. Complexes exist early in the endomembrane system in olfactory sensory neurons (OSNs), coupling these complexes to the conserved ciliary trafficking pathway. Expressed in olfactory sensory neurons in the antenna.

It is found in the cell membrane. Functionally, odorant receptor which mediates acceptance or avoidance behavior, depending on its substrates. The odorant receptor repertoire encodes a large collection of odor stimuli that vary widely in identity, intensity, and duration. May form a complex with Orco to form odorant-sensing units, providing sensitive and prolonged odorant signaling and calcium permeability. This Drosophila melanogaster (Fruit fly) protein is Odorant receptor 67c (Or67c).